The following is a 203-amino-acid chain: Urease accessory protein UreG (203 aa).

11–18 (GPVGSGKT) is a GTP binding site.

The protein belongs to the SIMIBI class G3E GTPase family. UreG subfamily. As to quaternary structure, homodimer. UreD, UreF and UreG form a complex that acts as a GTP-hydrolysis-dependent molecular chaperone, activating the urease apoprotein by helping to assemble the nickel containing metallocenter of UreC. The UreE protein probably delivers the nickel.

It is found in the cytoplasm. Facilitates the functional incorporation of the urease nickel metallocenter. This process requires GTP hydrolysis, probably effectuated by UreG. This Prochlorococcus marinus (strain MIT 9301) protein is Urease accessory protein UreG.